The sequence spans 106 residues: Thioredoxin (106 aa).

The region spanning 2–106 (SHYIELTEEN…LKEQLNKLLG (105 aa)) is the Thioredoxin domain. A disulfide bond links cysteine 30 and cysteine 33.

This sequence belongs to the thioredoxin family.

Its function is as follows. Participates in various redox reactions through the reversible oxidation of its active center dithiol to a disulfide and catalyzes dithiol-disulfide exchange reactions. In Helicobacter pylori (strain J99 / ATCC 700824) (Campylobacter pylori J99), this protein is Thioredoxin (trxA).